Reading from the N-terminus, the 1662-residue chain is MATDGASCEPDLSRAPEDAAGAAAEAAKKEFDVDTLSKSELRMLLSVMEGELEARDLVIEALRARRKEVFIQERYGRFNLNDPFLALQRDYEAGAGDKEKPVCTNPLSILEAVMAHCRKMQERMSAQLAAAESRQKKLEMEKLQLQALEQEHKKLAARLEEERGKNKQVVLMLVKECKQLSGRVIEEAQKLEDIMAKLEEEKKKTNELEEELSAEKRRSSEMEAQMEKQLSEFDTEREQLRAKLNREEAHTTDLKEEIDKMKKMIEQLKRGSDSKPSLSLPRKTKDRRLVSISVGTEGTVMRSVACQTDLVTESADHVKKLPLTMPVKPSTGSPLASANAKGSVCSSAAMARPGIDRQASHGDLIGVSVPAFPPSSANRIEENGPSTGSTPDPTSSIPPLPSNAAPSTAQTPGITPQNSQAPPMHSLHSPCANASLHPGLNPRIQAARFRFQGNANDPDQNGNTTQSPPSRDVSPTSRDNLVAKQLARNTVTQALSRFTGPQAGAPPRPGAPPTGDVSTHPSVGRTSVKTHGIARVDRGNPPPIPPKKPGLSQTPSPPHPQLKVIIDSSRASNTGAKGDNKTVASPPSSLPQGNRVINEENLPKSSSPQLPPKPSIDLTVAPAGCAVSALATSQVGAWPAATPGLNQPACSDSSLIIPTTIAFCSSINPVSASSCRPGASDSLLVTASGWSPSLTPLLMSGGPAPLAGRPTLLQQAAAQGNVTLLSMLLNEEGLDINYSCEDGHSALYSAAKNGHTDCVRLLLSAEAQVNAADKNGFTPLCAAAAQGHFECVELLIAYDANINHAADGGQTPLYLACKNGNKECIRLLLEAGTDRSVKTTDGWTPVHAAVDTGNVDSLKLLMYHRVPAHGNSFSEEESESGVFDLDEGEESPEGKSKPVVTADFINHANREGWTAAHIAASKGFKNCLEILCRHGGLETERRDKCNRTVHDVATDDCKHLLENLNALKIPLRISVGEIEPSNYGSDDFECENTICALNIRKQTSWDDFSKAVSQALTNHFQAISSDGWWSLEDMTCNNTTDSNIGLSARSIRSITLGNVPWSVGQSFVQSPWDFMIKNKAEHITVLLSGPQEGCLSSVTYASMIPLKMMQNYLRLVEQYHNVIFHGPEGSLQDYIVHQLALCLKHRQMAAGFSCEIVKAEVDAGFSKKQLLDLFISSACLIPVKQSPVKKKIIIILENLEKSSLFELLRDFLAPLENRSTESPCTFHKGNGMSECYYFHENCFLMGTIAKACLQGSDLLVQQHFRWVQLRWDGEPMQGLLQRFLRRKVVNKFRGQVPPPCDPVCKIVDWALSVWRQLNSCLSRLGTPEALLGPKYFLSCPVVPGHAQVTVKWMSKLWNGVITPRVQEAILSRASVKRQAGFRQTIAKRHPSQGQQAVVKAALSILLNKAVLHGCPLPRAELEQHRADFKGGSFPLSIVSSYNSCSKKKGESGAWRKVNTSPRRKSGRFSLPTWNKPDLSTEGIKNKTLSQLNCNRNASLSKQMSLENDVSLTLNLDQRLSLGSDDEADLVKELQSMCSSKSESDISKIADSRDDLRMFDSSGNNPVFSATINNLRMPVSQKEVCPLSSHHTTECSNSKSKTELGVSRVKSFLPVPRSKVTQCSQNTKRSSSSSNTRQIEINNNSKEENWNLHKNEHLEKPNK.

Disordered stretches follow at residues 1-23 (MATDGASCEPDLSRAPEDAAGAA), 202-235 (KKKTNELEEELSAEKRRSSEMEAQMEKQLSEFDT), 365-439 (IGVS…LHPG), and 453-477 (GNANDPDQNGNTTQSPPSRDVSPTS). Residues 118–275 (RKMQERMSAQ…EQLKRGSDSK (158 aa)) adopt a coiled-coil conformation. Low complexity predominate over residues 385-395 (PSTGSTPDPTS). Positions 404 to 421 (AAPSTAQTPGITPQNSQA) are enriched in polar residues. Arg-497 bears the Asymmetric dimethylarginine mark. The disordered stretch occupies residues 498 to 615 (FTGPQAGAPP…SSPQLPPKPS (118 aa)). Composition is skewed to polar residues over residues 516–529 (DVSTHPSVGRTSVK) and 582–592 (TVASPPSSLPQ). ANK repeat units lie at residues 708-738 (GRPTLLQQAAAQGNVTLLSMLLNEEGLDINY), 742-771 (DGHSALYSAAKNGHTDCVRLLLSAEAQVNA), 775-804 (NGFTPLCAAAAQGHFECVELLIAYDANINH), 808-837 (GGQTPLYLACKNGNKECIRLLLEAGTDRSV), and 841-870 (DGWTPVHAAVDTGNVDSLKLLMYHRVPAHG). Residues 871-897 (NSFSEEESESGVFDLDEGEESPEGKSK) are disordered. Residues 874–891 (SEEESESGVFDLDEGEES) show a composition bias toward acidic residues. An ANK 6 repeat occupies 911-941 (EGWTAAHIAASKGFKNCLEILCRHGGLETER). The tract at residues 1446–1473 (KKKGESGAWRKVNTSPRRKSGRFSLPTW) is disordered. Position 1523 is a phosphoserine (Ser-1523). The disordered stretch occupies residues 1614 to 1662 (VPRSKVTQCSQNTKRSSSSSNTRQIEINNNSKEENWNLHKNEHLEKPNK). The segment covering 1623 to 1637 (SQNTKRSSSSSNTRQ) has biased composition (low complexity). The segment covering 1644-1662 (SKEENWNLHKNEHLEKPNK) has biased composition (basic and acidic residues).

In terms of assembly, interacts with CTTN/cortactin SH3 domain. Interacts with STRN, STRN4/zinedin and MOB4/phocein; this interactions mediate the association with the STRIPAK core complex and may regulate dendritic spine distribution of the STRIPAK complex in hippocampal neurons. Activation of glutamate receptors weakens the interaction with STRN and STRN4.

The protein localises to the cytoplasm. The protein resides in the cell cortex. Its subcellular location is the cell projection. It is found in the dendritic spine. Its function is as follows. Regulates the dendritic spine distribution of CTTN/cortactin in hippocampal neurons, and thus controls dendritic spinogenesis and dendritic spine maintenance. Associates with the striatin-interacting phosphatase and kinase (STRIPAK) core complex to regulate dendritic spine distribution of the STRIPAK complex in hippocampal neurons. The polypeptide is Cortactin-binding protein 2 (CTTNBP2) (Callithrix jacchus (White-tufted-ear marmoset)).